The primary structure comprises 224 residues: Probable Brix domain-containing ribosomal biogenesis protein (224 aa).

Residues 1 to 196 (MMLITTSHRP…IWIMEDGRRW (196 aa)) enclose the Brix domain.

Its function is as follows. Probably involved in the biogenesis of the ribosome. This is Probable Brix domain-containing ribosomal biogenesis protein from Pyrococcus horikoshii (strain ATCC 700860 / DSM 12428 / JCM 9974 / NBRC 100139 / OT-3).